The chain runs to 149 residues: D-aminoacyl-tRNA deacylase (149 aa).

The Gly-cisPro motif, important for rejection of L-amino acids motif lies at 141–142 (GP).

The protein belongs to the DTD family. Homodimer.

The protein resides in the cytoplasm. The enzyme catalyses glycyl-tRNA(Ala) + H2O = tRNA(Ala) + glycine + H(+). It carries out the reaction a D-aminoacyl-tRNA + H2O = a tRNA + a D-alpha-amino acid + H(+). An aminoacyl-tRNA editing enzyme that deacylates mischarged D-aminoacyl-tRNAs. Also deacylates mischarged glycyl-tRNA(Ala), protecting cells against glycine mischarging by AlaRS. Acts via tRNA-based rather than protein-based catalysis; rejects L-amino acids rather than detecting D-amino acids in the active site. By recycling D-aminoacyl-tRNA to D-amino acids and free tRNA molecules, this enzyme counteracts the toxicity associated with the formation of D-aminoacyl-tRNA entities in vivo and helps enforce protein L-homochirality. This is D-aminoacyl-tRNA deacylase from Hydrogenovibrio crunogenus (strain DSM 25203 / XCL-2) (Thiomicrospira crunogena).